Consider the following 364-residue polypeptide: Melatonin receptor type 1B (364 aa).

Residues 1–42 (MPENSSIPNCCEASGLAARPSWSGSAGARPPVTARAPWVAPM) are Extracellular-facing. Asn-4 carries N-linked (GlcNAc...) asparagine glycosylation. Residues 43–63 (LSTVVVVTTAVDFVGNLLVIL) traverse the membrane as a helical segment. Residues 64 to 76 (SVLRNRKLRNAGN) are Cytoplasmic-facing. Residues 77–97 (LFVVSLALADLVIALYPYPLI) form a helical membrane-spanning segment. The Extracellular segment spans residues 98-115 (LVAIIRDGWVLGEAHCKA). The cysteines at positions 113 and 190 are disulfide-linked. Residues 116–136 (SAFVMGLSVIGSVFNITAIAI) traverse the membrane as a helical segment. Residues 137–155 (NRYCCICHSTTYHRVCSHW) lie on the Cytoplasmic side of the membrane. A helical membrane pass occupies residues 156–176 (YTPIYISLVWLLTLVALVPNF). Over 177–200 (FVGSLEYDPRIYSCTFIQTASTQY) the chain is Extracellular. The chain crosses the membrane as a helical span at residues 201 to 221 (TAAVVAIHFLLPMAVVSFCYL). Residues 222-253 (RIWVLVLQARRKAKATRKLRLRPSDLRSFLTM) lie on the Cytoplasmic side of the membrane. Residues 254 to 274 (FAVFVVFAICWAPLNCIGLAV) form a helical membrane-spanning segment. At 275-287 (AINPEAMALQVPE) the chain is on the extracellular side. Residues 288-308 (GLFVTSYFLAYFNSCLNAIVY) traverse the membrane as a helical segment. The Cytoplasmic segment spans residues 309-364 (GLLNQNFRREYKRILLAIWNTRRCIQHASKHCLTEERQGPTPPAARATVPVKEGAL). The segment at 343–364 (EERQGPTPPAARATVPVKEGAL) is disordered. A compositionally biased stretch (low complexity) spans 352–364 (AARATVPVKEGAL).

Belongs to the G-protein coupled receptor 1 family.

It localises to the cell membrane. High affinity receptor for melatonin. The activity of this receptor is mediated by pertussis toxin sensitive G proteins that inhibits adenylate cyclase activity. This is Melatonin receptor type 1B (Mtnr1b) from Mus musculus (Mouse).